The primary structure comprises 87 residues: uncharacterized protein (87 aa).

A helical transmembrane segment spans residues 42-62 (LADALYSAGSAAFTIAASLVA).

Belongs to the SPP1 holin family.

The protein resides in the membrane. This is an uncharacterized protein from Bacillus licheniformis.